Reading from the N-terminus, the 487-residue chain is Glutamyl-tRNA(Gln) amidotransferase subunit A (487 aa).

Catalysis depends on charge relay system residues Lys82 and Ser157. Ser181 acts as the Acyl-ester intermediate in catalysis.

Belongs to the amidase family. GatA subfamily. In terms of assembly, heterotrimer of A, B and C subunits.

It catalyses the reaction L-glutamyl-tRNA(Gln) + L-glutamine + ATP + H2O = L-glutaminyl-tRNA(Gln) + L-glutamate + ADP + phosphate + H(+). Functionally, allows the formation of correctly charged Gln-tRNA(Gln) through the transamidation of misacylated Glu-tRNA(Gln) in organisms which lack glutaminyl-tRNA synthetase. The reaction takes place in the presence of glutamine and ATP through an activated gamma-phospho-Glu-tRNA(Gln). This is Glutamyl-tRNA(Gln) amidotransferase subunit A from Fusobacterium nucleatum subsp. nucleatum (strain ATCC 25586 / DSM 15643 / BCRC 10681 / CIP 101130 / JCM 8532 / KCTC 2640 / LMG 13131 / VPI 4355).